The sequence spans 263 residues: Endonuclease 8 (263 aa).

The active-site Schiff-base intermediate with DNA is Pro2. The active-site Proton donor is Glu3. The active-site Proton donor; for beta-elimination activity is Lys53. DNA contacts are provided by Gln70, Arg125, and Asn169. The FPG-type zinc-finger motif lies at 229–263 (KVFHRDGELCERCGGIIEKTTLSSRPFYWCPGCQH). The active-site Proton donor; for delta-elimination activity is Arg253.

The protein belongs to the FPG family. Zn(2+) is required as a cofactor.

The enzyme catalyses 2'-deoxyribonucleotide-(2'-deoxyribose 5'-phosphate)-2'-deoxyribonucleotide-DNA = a 3'-end 2'-deoxyribonucleotide-(2,3-dehydro-2,3-deoxyribose 5'-phosphate)-DNA + a 5'-end 5'-phospho-2'-deoxyribonucleoside-DNA + H(+). Its function is as follows. Involved in base excision repair of DNA damaged by oxidation or by mutagenic agents. Acts as a DNA glycosylase that recognizes and removes damaged bases. Has a preference for oxidized pyrimidines, such as thymine glycol, 5,6-dihydrouracil and 5,6-dihydrothymine. Has AP (apurinic/apyrimidinic) lyase activity and introduces nicks in the DNA strand. Cleaves the DNA backbone by beta-delta elimination to generate a single-strand break at the site of the removed base with both 3'- and 5'-phosphates. In Escherichia coli (strain SE11), this protein is Endonuclease 8.